The chain runs to 164 residues: UPF0114 protein BCI_0033 (164 aa).

3 consecutive transmembrane segments (helical) span residues 15–35 (LLFP…LKFF), 53–73 (LILI…LVMV), and 136–156 (IMWC…MAYI).

This sequence belongs to the UPF0114 family.

Its subcellular location is the cell membrane. This chain is UPF0114 protein BCI_0033, found in Baumannia cicadellinicola subsp. Homalodisca coagulata.